The following is a 941-amino-acid chain: Protein BREAST CANCER SUSCEPTIBILITY 1 homolog (941 aa).

The RING-type zinc finger occupies 16–54 (CPICLSLYNSAVSLSCNHVFCNACIVKSMKMDATCPVCK). Disordered regions lie at residues 87-282 (FVSQ…ILPS) and 303-528 (KVKV…GKDD). 2 stretches are compositionally biased toward basic and acidic residues: residues 96 to 115 (SDKEKQVRDASVEKASDKNR) and 125 to 136 (KRNEYGKTKEID). Residues 157–173 (LLQNLSAESLTKPTESV) are compositionally biased toward polar residues. The segment covering 175-196 (TAEKPKDYTENTVIRLDEHPSL) has biased composition (basic and acidic residues). Residues 216–236 (NSSQRTESDQLLGTTPVNVPS) are compositionally biased toward polar residues. The segment covering 242–255 (DSDHESPSKEDEQQ) has biased composition (basic and acidic residues). The Nuclear localization signal 1 signature appears at 298-305 (QKKLPKVK). Polar residues-rich tracts occupy residues 329 to 357 (GVSQEDNMESSAAATISEQQDSRGTSGTI) and 376 to 391 (SKAQSTRVQSDLNVSN). 2 stretches are compositionally biased toward basic and acidic residues: residues 428–453 (GKGDQDQAHGPSDTHPEKRSPTEKPS) and 477–487 (KTSEKKLKLDS). Positions 444 to 451 (EKRSPTEK) match the Nuclear localization signal 2 motif. Positions 489-498 (MISSKATQPH) are enriched in polar residues. Residues 512 to 528 (DKQDSRNNRKSTVGKDD) are compositionally biased toward basic and acidic residues. The segment at 561-612 (KFTCAFCQCSEDTEASGEMTHYYRGEPVSADFNGGSKVIHVHKNCAEWAPNV) adopts a C2HC pre-PHD-type zinc-finger fold. The PHD-type; degenerate zinc-finger motif lies at 632–681 (ISCSCCGLKGAALGCYNKSCKNSFHVTCAKLIPECRWDNVKFVMLCPLDA). BRCT domains lie at 724–819 (KQFH…PYEI) and 840–941 (KKPK…LVLI).

Forms heterodimer with BARD1/ROW1. Expressed ubiquitously with highest levels in flower buds. Mostly expressed in flowers and siliques, and, to a lower extent, in roots, rosette leaves, inflorescence and young cauline leaves.

It is found in the nucleus. Its function is as follows. Plays a role in DNA repair and in cell-cycle control. Required for the repair of DNA double-strand breaks (DSBs), both natural and induced by genotoxic stress, by homologous recombination (HR). This is Protein BREAST CANCER SUSCEPTIBILITY 1 homolog from Arabidopsis thaliana (Mouse-ear cress).